A 564-amino-acid chain; its full sequence is 60 kDa lysophospholipase (564 aa).

The Asparaginase/glutaminase domain maps to arginine 9–aspartate 355. Threonine 19 (acyl-ester intermediate) is an active-site residue. Residues threonine 41 to lysine 350 are asparaginase. Substrate is bound by residues aspartate 84 to serine 86 and threonine 116 to aspartate 117. 5 ANK repeats span residues glycine 141–proline 170, valine 396–leucine 426, serine 430–alanine 459, aspartate 463–proline 492, and aspartate 530–alanine 559. Serine 478 is subject to Phosphoserine.

In the N-terminal section; belongs to the asparaginase 1 family. As to quaternary structure, monomer.

It catalyses the reaction a 1-acyl-sn-glycero-3-phosphocholine + H2O = sn-glycerol 3-phosphocholine + a fatty acid + H(+). The enzyme catalyses L-asparagine + H2O = L-aspartate + NH4(+). It carries out the reaction a 1-O-alkyl-2-acetyl-sn-glycero-3-phosphocholine + H2O = a 1-O-alkyl-sn-glycero-3-phosphocholine + acetate + H(+). The catalysed reaction is 1-hexadecanoyl-sn-glycero-3-phosphocholine + H2O = sn-glycerol 3-phosphocholine + hexadecanoate + H(+). It catalyses the reaction 2 1-hexadecanoyl-sn-glycero-3-phosphocholine = 1,2-dihexadecanoyl-sn-glycero-3-phosphocholine + sn-glycerol 3-phosphocholine. The enzyme catalyses 1-octadecanoyl-sn-glycero-3-phosphocholine + H2O = octadecanoate + sn-glycerol 3-phosphocholine + H(+). It carries out the reaction 1-(9Z-octadecenoyl)-sn-glycero-3-phosphocholine + H2O = sn-glycerol 3-phosphocholine + (9Z)-octadecenoate + H(+). The catalysed reaction is 1-hexadecanoyl-sn-glycero-3-phosphoethanolamine + H2O = sn-glycero-3-phosphoethanolamine + hexadecanoate + H(+). It catalyses the reaction 1-(9Z-octadecenoyl)-sn-glycero-3-phosphoethanolamine + H2O = sn-glycero-3-phosphoethanolamine + (9Z)-octadecenoate + H(+). The enzyme catalyses 1-hexadecanoyl-sn-glycero-3-phosphoethanolamine + 1-hexadecanoyl-sn-glycero-3-phosphocholine = 1,2-dihexadecanoyl-sn-glycero-3-phosphoethanolamine + sn-glycerol 3-phosphocholine. It carries out the reaction 2-(5Z,8Z,11Z,14Z)-eicosatetraenoyl-sn-glycero-3-phosphocholine + H2O = sn-glycerol 3-phosphocholine + (5Z,8Z,11Z,14Z)-eicosatetraenoate + H(+). The catalysed reaction is 2-hexadecanoyl-sn-glycero-3-phosphocholine + H2O = sn-glycerol 3-phosphocholine + hexadecanoate + H(+). It catalyses the reaction 2 2-hexadecanoyl-sn-glycero-3-phosphocholine = 1,2-dihexadecanoyl-sn-glycero-3-phosphocholine + sn-glycerol 3-phosphocholine. The enzyme catalyses 1-O-(9Z)-octadecenoyl-2-O-acetyl-sn-glycero-3-phosphocholine + H2O = 2-acetyl-sn-glycero-3-phosphocholine + (9Z)-octadecenoate + H(+). It carries out the reaction a 1-acyl-sn-glycero-3-phospho-(1D-myo-inositol) + 1-hexadecanoyl-sn-glycero-3-phosphocholine = a 1-acyl-2-hexadecanoyl-sn-glycero-3-phospho-(1D-myo-inositol) + sn-glycerol 3-phosphocholine. The catalysed reaction is 2 2-(5Z,8Z,11Z,14Z)-eicosatetraenoyl-sn-glycero-3-phosphocholine = 1,2-di-(5Z,8Z,11Z,14Z-eicosatetraenoyl)-sn-glycero-3-phosphocholine + sn-glycerol 3-phosphocholine. Functionally, exhibits lysophospholipase, transacylase, PAF acetylhydrolase and asparaginase activities. Can catalyze three types of transacylation reactions: (1) acyl transfer from 1-acyl-sn-glycero-3-phosphocholine (1-acyl-GPC) to the sn-1(3) positions of glycerol and 2-acylglycerol (sn-1 to -1(3) transfer), (2) acyl transfer from 1-acyl-GPC to the sn-2 positions of 1-acyl-GPC, 1-acyl-sn-glycero-3-phosphoethanolamine (1-acyl-GPE), and other lysophospholipids (sn-1 to -2 transfer) and (3) acyl transfer from 2-acyl-GPC to the sn-1 position of 2-acyl-GPC and 2-acyl-GPE (sn-2 to -1 transfer). Mediates the synthesis of 1-arachidonoyl species of phospholipids by transferring the arachidonoyl residue from 2-arachidonoyl lysophospholipid to the sn-1 position of 2-acyl lysophospholipid. The polypeptide is 60 kDa lysophospholipase (Aspg) (Mus musculus (Mouse)).